Consider the following 937-residue polypeptide: Translation initiation factor IF-2 (937 aa).

Disordered stretches follow at residues 61 to 156 (IQAN…KAKQ) and 171 to 274 (LTQS…SHKI). Positions 179–196 (AKKEISEVKKQEQEIKRH) are enriched in basic and acidic residues. Residues 197–208 (ENIKRRTGFRVI) show a composition bias toward basic residues. Basic and acidic residues predominate over residues 237–252 (EDIKKEWQEKDKQEAK). The tr-type G domain occupies 436–605 (ERPPVVTIMG…LIQADIMELK (170 aa)). The tract at residues 445 to 452 (GHVDHGKT) is G1. Position 445-452 (445-452 (GHVDHGKT)) interacts with GTP. The tract at residues 470 to 474 (GITQH) is G2. Positions 491 to 494 (DTPG) are G3. GTP-binding positions include 491 to 495 (DTPGH) and 545 to 548 (NKMD). The interval 545–548 (NKMD) is G4. The segment at 581–583 (SAK) is G5.

It belongs to the TRAFAC class translation factor GTPase superfamily. Classic translation factor GTPase family. IF-2 subfamily.

It localises to the cytoplasm. One of the essential components for the initiation of protein synthesis. Protects formylmethionyl-tRNA from spontaneous hydrolysis and promotes its binding to the 30S ribosomal subunits. Also involved in the hydrolysis of GTP during the formation of the 70S ribosomal complex. This chain is Translation initiation factor IF-2, found in Helicobacter pylori (strain G27).